The primary structure comprises 88 residues: Large ribosomal subunit protein bL27 (88 aa).

This sequence belongs to the bacterial ribosomal protein bL27 family.

This chain is Large ribosomal subunit protein bL27, found in Mycobacterium leprae (strain TN).